Consider the following 454-residue polypeptide: tRNA modification GTPase MnmE (454 aa).

(6S)-5-formyl-5,6,7,8-tetrahydrofolate is bound by residues R23, E80, and K120. One can recognise a TrmE-type G domain in the interval 216 to 377 (GMKVVIAGRP…LRNHLKQSMG (162 aa)). N226 contributes to the K(+) binding site. Residues 226-231 (NAGKSS), 245-251 (TDIAGTT), 270-273 (DTAG), 335-338 (NKAD), and 358-360 (SAR) each bind GTP. S230 is a Mg(2+) binding site. T245, I247, and T250 together coordinate K(+). T251 provides a ligand contact to Mg(2+). K454 serves as a coordination point for (6S)-5-formyl-5,6,7,8-tetrahydrofolate.

Belongs to the TRAFAC class TrmE-Era-EngA-EngB-Septin-like GTPase superfamily. TrmE GTPase family. As to quaternary structure, homodimer. Heterotetramer of two MnmE and two MnmG subunits. Requires K(+) as cofactor.

It is found in the cytoplasm. Functionally, exhibits a very high intrinsic GTPase hydrolysis rate. Involved in the addition of a carboxymethylaminomethyl (cmnm) group at the wobble position (U34) of certain tRNAs, forming tRNA-cmnm(5)s(2)U34. This Shigella sonnei (strain Ss046) protein is tRNA modification GTPase MnmE.